Consider the following 82-residue polypeptide: Small ribosomal subunit protein bS16 (82 aa).

The protein belongs to the bacterial ribosomal protein bS16 family.

The protein is Small ribosomal subunit protein bS16 of Vibrio cholerae serotype O1 (strain ATCC 39541 / Classical Ogawa 395 / O395).